Reading from the N-terminus, the 301-residue chain is Thioredoxin-related transmembrane protein 2-A (301 aa).

Residues 1–19 (MSLIRGLISTIYYLPKIYK) form the signal peptide. The Extracellular portion of the chain corresponds to 20–111 (WFYRPYYFLS…VVLFFRVDLR (92 aa)). The chain crosses the membrane as a helical span at residues 112 to 132 (FGLLYLTLCVVFLITCKPPAY). Residues 122–269 (VFLITCKPPA…IFQKYKKFSK (148 aa)) enclose the Thioredoxin domain. The Cytoplasmic portion of the chain corresponds to 133 to 301 (MGPENIKYFR…EEDSESKKDK (169 aa)). The disordered stretch occupies residues 268–301 (SKGEKPEEPQPVLEEESESPLEEEEEDSESKKDK). A compositionally biased stretch (acidic residues) spans 280-295 (LEEESESPLEEEEEDS). The Di-lysine motif signature appears at 298 to 301 (KKDK).

In terms of assembly, monomer. Homodimer; disulfide-linked. Occurs in both reduced and oxidized monomeric form. Oxidative conditions increase homodimerization.

It localises to the endoplasmic reticulum membrane. It is found in the mitochondrion membrane. Endoplasmic reticulum and mitochondria-associated protein that probably functions as a regulator of cellular redox state and thereby regulates protein post-translational modification, protein folding and mitochondrial activity. The sequence is that of Thioredoxin-related transmembrane protein 2-A from Danio rerio (Zebrafish).